The primary structure comprises 716 residues: tRNA(Met) cytidine acetyltransferase TmcA (716 aa).

Residues Gln-192, 217–226, and Arg-364 each bind ATP; that span reads GRGKSYVIGL. In terms of domain architecture, N-acetyltransferase spans 401–567; the sequence is REVLARDREV…KNVALAKPLD (167 aa). Residues 493–495 and 500–506 each bind acetyl-CoA; these read IAV and QRRGLGS.

The protein belongs to the RNA cytidine acetyltransferase family. TmcA subfamily.

It is found in the cytoplasm. It catalyses the reaction cytidine(34) in elongator tRNA(Met) + acetyl-CoA + ATP + H2O = N(4)-acetylcytidine(34) in elongator tRNA(Met) + ADP + phosphate + CoA + H(+). Functionally, catalyzes the formation of N(4)-acetylcytidine (ac(4)C) at the wobble position of tRNA(Met), by using acetyl-CoA as an acetyl donor and ATP (or GTP). This Aeropyrum pernix (strain ATCC 700893 / DSM 11879 / JCM 9820 / NBRC 100138 / K1) protein is tRNA(Met) cytidine acetyltransferase TmcA.